Here is a 345-residue protein sequence, read N- to C-terminus: Holliday junction branch migration complex subunit RuvB (345 aa).

The segment at 1-22 is disordered; sequence MIETDALSGGTPRRLVTQQPLS. The tract at residues 4-193 is large ATPase domain (RuvB-L); the sequence is TDALSGGTPR…FGIVARLEFY (190 aa). Residues Leu32, Arg33, Gly74, Lys77, Thr78, Thr79, 140–142, Arg183, Tyr193, and Arg230 contribute to the ATP site; that span reads EDY. Thr78 is a binding site for Mg(2+). The segment at 194–264 is small ATPAse domain (RuvB-S); that stretch reads TPEELTRIVR…VADAALSMLD (71 aa). The head domain (RuvB-H) stretch occupies residues 267 to 345; the sequence is PAGLDVMDRK…HFGFVPPERV (79 aa). DNA is bound by residues Arg322 and Arg327.

Belongs to the RuvB family. In terms of assembly, homohexamer. Forms an RuvA(8)-RuvB(12)-Holliday junction (HJ) complex. HJ DNA is sandwiched between 2 RuvA tetramers; dsDNA enters through RuvA and exits via RuvB. An RuvB hexamer assembles on each DNA strand where it exits the tetramer. Each RuvB hexamer is contacted by two RuvA subunits (via domain III) on 2 adjacent RuvB subunits; this complex drives branch migration. In the full resolvosome a probable DNA-RuvA(4)-RuvB(12)-RuvC(2) complex forms which resolves the HJ.

It is found in the cytoplasm. It catalyses the reaction ATP + H2O = ADP + phosphate + H(+). In terms of biological role, the RuvA-RuvB-RuvC complex processes Holliday junction (HJ) DNA during genetic recombination and DNA repair, while the RuvA-RuvB complex plays an important role in the rescue of blocked DNA replication forks via replication fork reversal (RFR). RuvA specifically binds to HJ cruciform DNA, conferring on it an open structure. The RuvB hexamer acts as an ATP-dependent pump, pulling dsDNA into and through the RuvAB complex. RuvB forms 2 homohexamers on either side of HJ DNA bound by 1 or 2 RuvA tetramers; 4 subunits per hexamer contact DNA at a time. Coordinated motions by a converter formed by DNA-disengaged RuvB subunits stimulates ATP hydrolysis and nucleotide exchange. Immobilization of the converter enables RuvB to convert the ATP-contained energy into a lever motion, pulling 2 nucleotides of DNA out of the RuvA tetramer per ATP hydrolyzed, thus driving DNA branch migration. The RuvB motors rotate together with the DNA substrate, which together with the progressing nucleotide cycle form the mechanistic basis for DNA recombination by continuous HJ branch migration. Branch migration allows RuvC to scan DNA until it finds its consensus sequence, where it cleaves and resolves cruciform DNA. This Laribacter hongkongensis (strain HLHK9) protein is Holliday junction branch migration complex subunit RuvB.